The sequence spans 35 residues: MSDIN-like toxin proprotein 6 (35 aa).

The propeptide occupies Met1–Pro10. The segment at residues Phe11–Pro18 is a cross-link (cyclopeptide (Phe-Pro)). Residues Cys19–Cys35 constitute a propeptide that is removed on maturation.

Belongs to the MSDIN fungal toxin family. In terms of processing, processed by the macrocyclase-peptidase enzyme POPB to yield a toxic cyclic octapeptide. POPB first removes 10 residues from the N-terminus. Conformational trapping of the remaining peptide forces the enzyme to release this intermediate rather than proceed to macrocyclization. The enzyme rebinds the remaining peptide in a different conformation and catalyzes macrocyclization of the N-terminal 8 residues. Expressed in basidiocarps.

Probable toxin that belongs to the MSDIN-like toxin family responsible for a large number of food poisoning cases and deaths. The chain is MSDIN-like toxin proprotein 6 from Amanita exitialis (Guangzhou destroying angel).